A 490-amino-acid polypeptide reads, in one-letter code: Sec sixty-one protein homolog (490 aa).

The Cytoplasmic portion of the chain corresponds to Met1–Lys32. A helical transmembrane segment spans residues Ile33 to Leu53. The Lumenal segment spans residues Pro54–Lys121. Residues Val122 to Gly142 traverse the membrane as a helical segment. Topologically, residues Asp143–Ser146 are cytoplasmic. A helical membrane pass occupies residues Val147 to Leu167. At Ala168–Gly174 the chain is on the lumenal side. The helical transmembrane segment at Phe175 to Ala195 threads the bilayer. The Cytoplasmic portion of the chain corresponds to Asp196–Asp242. Residues Tyr243–Leu263 form a helical membrane-spanning segment. Topologically, residues Gln264–Cys293 are lumenal. The helical transmembrane segment at Leu294–Ile314 threads the bilayer. The Cytoplasmic segment spans residues Gln315 to Leu339. Residues Leu340–Val360 traverse the membrane as a helical segment. A topological domain (lumenal) is located at residue Thr361. The helical transmembrane segment at Gln362–Ala382 threads the bilayer. Topologically, residues Asp383–Lys421 are cytoplasmic. Residues Val422–Glu442 traverse the membrane as a helical segment. At Ser443–Lys449 the chain is on the lumenal side. A helical membrane pass occupies residues Ala450 to Glu470. Over Tyr471–Met490 the chain is Cytoplasmic.

It belongs to the SecY/SEC61-alpha family. In terms of assembly, component of the heterotrimeric Ssh1 complex, which is composed of SSH1, SBH2 and SSS1.

Its subcellular location is the endoplasmic reticulum membrane. Part of the Ssh1 complex, which probably is the major component of a channel-forming translocon complex that may function exclusively in the cotranslational pathway of protein endoplasmic reticulum (ER) import. This chain is Sec sixty-one protein homolog (SSH1), found in Saccharomyces cerevisiae (strain ATCC 204508 / S288c) (Baker's yeast).